The following is a 489-amino-acid chain: Protein-export membrane protein SecD (489 aa).

6 helical membrane passes run 17–37 (VLIV…IPPA), 328–348 (FIQI…AFMV), 356–376 (SIVV…LGIA), 384–404 (LASI…LVVI), 428–448 (LGII…LALM), and 450–470 (LSTL…GVIF).

This sequence belongs to the SecD/SecF family. SecD subfamily. Part of the protein translocation apparatus. Forms a complex with SecF.

Its subcellular location is the cell membrane. In terms of biological role, involved in protein export. This is Protein-export membrane protein SecD from Methanolacinia petrolearia (strain DSM 11571 / OCM 486 / SEBR 4847) (Methanoplanus petrolearius).